The chain runs to 338 residues: mRNA decay activator protein ZFP36L1 (338 aa).

The segment at 1-111 (MTTTLVSATI…QKQPGSGQVN (111 aa)) is necessary and sufficient for the association with mRNA decay enzymes and mRNA decay activation. Position 54 is a phosphoserine; by MAPKAPK2 (serine 54). The segment at 71–113 (LKGEPAPSLSSRDSRFRDRSFSEGGERLLPTQKQPGSGQVNSS) is disordered. A compositionally biased stretch (basic and acidic residues) spans 82–96 (RDSRFRDRSFSEGGE). Serine 90 is subject to Phosphoserine; by PKB/AKT1. Position 92 is a phosphoserine; by PKB/AKT1 and MAPKAPK2 (serine 92). Residues 101 to 113 (TQKQPGSGQVNSS) show a composition bias toward polar residues. C3H1-type zinc fingers lie at residues 114 to 142 (RYKTELCRPFEENGACKYGDKCQFAHGIH) and 152 to 180 (KYKTELCRTFHTIGFCPYGPRCHFIHNAE). Residues 185–338 (LAGGRDLSAD…IFSRLSISDD (154 aa)) are necessary for mRNA decay activation. Serine 203 bears the Phosphoserine; by PKB/AKT1 and MAPKAPK2 mark. Residues 273-338 (SPTTFLFRPM…IFSRLSISDD (66 aa)) form a disordered region. Over residues 305-318 (YLSSSSSSHSGSDS) the composition is skewed to low complexity. Serine 318 is modified (phosphoserine). The residue at position 334 (serine 334) is a Phosphoserine; by RPS6KA1.

As to quaternary structure, associates with the cytoplasmic CCR4-NOT deadenylase and RNA exosome complexes to trigger ARE-containing mRNA deadenylation and decay processes. Interacts with CNOT1. Interacts (via N-terminus) with CNOT6. Interacts with CNOT7; this interaction is inhibited in response to phorbol 12-myristate 13-acetate (PMA) treatment in a p38 MAPK-dependent manner. Interacts with DCP1A. Interacts (via N-terminus) with DCP2. Interacts (via N-terminus) with EXOSC2. Interacts with XRN1. Interacts (via phosphorylated form) with YWHAB; this interaction occurs in a protein kinase AKT1-dependent manner. Interacts (via phosphorylated form) with YWHAZ; this interaction occurs in a p38 MAPK- and AKT-signaling pathways. Phosphorylated. Phosphorylated by RPS6KA1 at Ser-334 upon phorbol 12-myristate 13-acetate (PMA) treatment; this phosphorylation results in dissociation of the CCR4-NOT deadenylase complex and induces p38 MAPK-mediated stabilization of the low-density lipoprotein receptor LDLR mRNA. Phosphorylated by protein kinase AKT1 at Ser-92 and Ser-203 in response to insulin; these phosphorylations stabilize ZFP36L1, increase the association with 14-3-3 proteins and mediate ARE-containing mRNA stabilization. AKT1-mediated phosphorylation at Ser-92 does not impair ARE-containing RNA-binding. Phosphorylated at Ser-54, Ser-92 and Ser-203 by MAPKAPK2; these phosphorylations increase the association with 14-3-3 proteins and mediate ARE-containing mRNA stabilization in a protein kinase AKT1-independent manner. MAPKAPK2-mediated phosphorylations at Ser-54, Ser-92 and Ser-203 do not impair ARE-containing RNA-binding. Phosphorylations increase the association with 14-3-3 proteins and mediate ARE-containing mRNA stabilization during early adipogenesis in a p38 MAPK- and AKT-dependent manner. Post-translationally, ubiquitinated. Ubiquitination leads to proteasomal degradation, a process inhibited by phosphorylations at Ser-90, Ser-92 and Ser-203. In terms of tissue distribution, expressed in preadipocytes and adipocytes. Expressed in the proximal and distal tubules in the renal cortex (at protein level). Expressed in ovary, heart, kidney, lung, spleen and thymus. Weakly expressed in brain, liver and testis. Expressed in osteoblasts. Expressed in embryonic stem cells (ESCs). Expressed through B lymphocyte development.

It is found in the nucleus. The protein localises to the cytoplasm. Its subcellular location is the cytoplasmic granule. It localises to the P-body. Its function is as follows. Zinc-finger RNA-binding protein that destabilizes several cytoplasmic AU-rich element (ARE)-containing mRNA transcripts by promoting their poly(A) tail removal or deadenylation, and hence provide a mechanism for attenuating protein synthesis. Acts as a 3'-untranslated region (UTR) ARE mRNA-binding adapter protein to communicate signaling events to the mRNA decay machinery. Functions by recruiting the CCR4-NOT deadenylating complex and components of the cytoplasmic RNA decay machinery to the bound ARE-containing mRNAs, and hence promotes ARE-mediated mRNA deadenylation and decay processes. Also induces the degradation of ARE-containing mRNAs even in absence of poly(A) tail. Binds to 3'-UTR ARE of numerous mRNAs. Positively regulates early adipogenesis by promoting ARE-mediated mRNA decay of immediate early genes (IEGs). Promotes ARE-mediated mRNA decay of mineralocorticoid receptor NR3C2 mRNA in response to hypertonic stress. Negatively regulates hematopoietic/erythroid cell differentiation by promoting ARE-mediated mRNA decay of the transcription factor STAT5B mRNA. Positively regulates monocyte/macrophage cell differentiation by promoting ARE-mediated mRNA decay of the cyclin-dependent kinase CDK6 mRNA. Promotes degradation of ARE-containing pluripotency-associated mRNAs in embryonic stem cells (ESCs), such as NANOG, through a fibroblast growth factor (FGF)-induced MAPK-dependent signaling pathway, and hence attenuates ESC self-renewal and positively regulates mesendoderm differentiation. May play a role in mediating pro-apoptotic effects in malignant B-cells by promoting ARE-mediated mRNA decay of BCL2 mRNA. In association with ZFP36L2 maintains quiescence on developing B lymphocytes by promoting ARE-mediated decay of several mRNAs encoding cell cycle regulators that help B cells progress through the cell cycle, and hence ensuring accurate variable-diversity-joining (VDJ) recombination and functional immune cell formation. Together with ZFP36L2 is also necessary for thymocyte development and prevention of T-cell acute lymphoblastic leukemia (T-ALL) transformation by promoting ARE-mediated mRNA decay of the oncogenic transcription factor NOTCH1 mRNA. Involved in the delivery of target ARE-mRNAs to processing bodies (PBs). In addition to its cytosolic mRNA-decay function, plays a role in the regulation of nuclear mRNA 3'-end processing; modulates mRNA 3'-end maturation efficiency of the DLL4 mRNA through binding with an ARE embedded in a weak noncanonical polyadenylation (poly(A)) signal in endothelial cells. Also involved in the regulation of stress granule (SG) and P-body (PB) formation and fusion. Plays a role in vasculogenesis and endocardial development. Involved in the regulation of keratinocyte proliferation, differentiation and apoptosis. Plays a role in myoblast cell differentiation. This Mus musculus (Mouse) protein is mRNA decay activator protein ZFP36L1.